The following is a 62-amino-acid chain: MSETPAAFDRRMLEALVCPVTHATLEYDAGAQELVSKGAKLAFPIRNGIPVMLVDEARPLDD.

The protein belongs to the UPF0434 family.

The sequence is that of UPF0434 protein SPO3421 from Ruegeria pomeroyi (strain ATCC 700808 / DSM 15171 / DSS-3) (Silicibacter pomeroyi).